The chain runs to 477 residues: Bifunctional protein HldE (477 aa).

The segment at 1–318 is ribokinase; sequence MKVTLPEFER…ENAVRGRADT (318 aa). Residue 195 to 198 coordinates ATP; that stretch reads NLSE. The active site involves Asp264. The tract at residues 344–477 is cytidylyltransferase; the sequence is MTNGVFDILH…IKKIQKDSDK (134 aa).

In the N-terminal section; belongs to the carbohydrate kinase PfkB family. This sequence in the C-terminal section; belongs to the cytidylyltransferase family. In terms of assembly, homodimer.

It carries out the reaction D-glycero-beta-D-manno-heptose 7-phosphate + ATP = D-glycero-beta-D-manno-heptose 1,7-bisphosphate + ADP + H(+). It catalyses the reaction D-glycero-beta-D-manno-heptose 1-phosphate + ATP + H(+) = ADP-D-glycero-beta-D-manno-heptose + diphosphate. It participates in nucleotide-sugar biosynthesis; ADP-L-glycero-beta-D-manno-heptose biosynthesis; ADP-L-glycero-beta-D-manno-heptose from D-glycero-beta-D-manno-heptose 7-phosphate: step 1/4. The protein operates within nucleotide-sugar biosynthesis; ADP-L-glycero-beta-D-manno-heptose biosynthesis; ADP-L-glycero-beta-D-manno-heptose from D-glycero-beta-D-manno-heptose 7-phosphate: step 3/4. Functionally, catalyzes the phosphorylation of D-glycero-D-manno-heptose 7-phosphate at the C-1 position to selectively form D-glycero-beta-D-manno-heptose-1,7-bisphosphate. Catalyzes the ADP transfer from ATP to D-glycero-beta-D-manno-heptose 1-phosphate, yielding ADP-D-glycero-beta-D-manno-heptose. This Citrobacter koseri (strain ATCC BAA-895 / CDC 4225-83 / SGSC4696) protein is Bifunctional protein HldE.